Consider the following 128-residue polypeptide: Holo-[acyl-carrier-protein] synthase (128 aa).

Mg(2+)-binding residues include aspartate 8 and glutamate 60.

Belongs to the P-Pant transferase superfamily. AcpS family. Requires Mg(2+) as cofactor.

It is found in the cytoplasm. It carries out the reaction apo-[ACP] + CoA = holo-[ACP] + adenosine 3',5'-bisphosphate + H(+). Functionally, transfers the 4'-phosphopantetheine moiety from coenzyme A to a Ser of acyl-carrier-protein. In Anaeromyxobacter sp. (strain K), this protein is Holo-[acyl-carrier-protein] synthase.